Consider the following 110-residue polypeptide: UPF0145 protein MTH_507 (110 aa).

The protein belongs to the UPF0145 family.

The chain is UPF0145 protein MTH_507 from Methanothermobacter thermautotrophicus (strain ATCC 29096 / DSM 1053 / JCM 10044 / NBRC 100330 / Delta H) (Methanobacterium thermoautotrophicum).